Reading from the N-terminus, the 284-residue chain is Bifunctional protein FolD 1 (284 aa).

NADP(+)-binding positions include 166–168 (GAS) and Ile-232.

This sequence belongs to the tetrahydrofolate dehydrogenase/cyclohydrolase family. As to quaternary structure, homodimer.

It catalyses the reaction (6R)-5,10-methylene-5,6,7,8-tetrahydrofolate + NADP(+) = (6R)-5,10-methenyltetrahydrofolate + NADPH. It carries out the reaction (6R)-5,10-methenyltetrahydrofolate + H2O = (6R)-10-formyltetrahydrofolate + H(+). Its pathway is one-carbon metabolism; tetrahydrofolate interconversion. In terms of biological role, catalyzes the oxidation of 5,10-methylenetetrahydrofolate to 5,10-methenyltetrahydrofolate and then the hydrolysis of 5,10-methenyltetrahydrofolate to 10-formyltetrahydrofolate. This Ectopseudomonas mendocina (strain ymp) (Pseudomonas mendocina) protein is Bifunctional protein FolD 1.